The chain runs to 433 residues: O-methyltransferase aclM (433 aa).

Residues 5–37 (LTDAERTALQTSLEALNRQVEATRNILRSNSQK) are a coiled coil. S-adenosyl-L-methionine is bound by residues Asp277 and 311 to 313 (GDF). The Proton acceptor role is filled by His330.

It belongs to the class I-like SAM-binding methyltransferase superfamily. Cation-independent O-methyltransferase family. COMT subfamily.

It functions in the pathway mycotoxin biosynthesis. O-methyltransferase; part of the gene cluster that mediates the biosynthesis of aspirochlorine (or antibiotic A30641), an unusual halogenated spiro compound with distinctive antifungal properties due to selective inhibition of protein biosynthesis, and which is also active against bacteria, viruses, and murine tumor cells. The non-ribosomal peptide synthetase (NRPS) aclP is responsible the formation of the diketopiperazine (DKP) core from the condensation of 2 phenylalanine residues. One Phe residue is tailored into chlorotyrosine by hydroxylation and chlorination, whereas the second Phe undergoes an unprecedented C-C bond cleavage to be converted into glycine. After formation of the DKP, sulfur is incorporated into the DKP by conjugation with glutathione by aclG, followed by its stepwise degradation to the thiol by aclI, aclJ and aclK, and the dithiol oxidation by aclT. In addition, oxygenases (aclB, aclC, aclL and aclO) and O-methyltransferases (aclM and aclU) act as tailoring enzymes to produce the intermediate dechloroaspirochlorine. Ultimately, chlorination of dechloroaspirochlorine by the halogenase aclH is the last step in the aspirochlorine pathway. The polypeptide is O-methyltransferase aclM (Aspergillus oryzae (strain ATCC 42149 / RIB 40) (Yellow koji mold)).